The following is a 980-amino-acid chain: NACHT, LRR and PYD domains-containing protein 7 (980 aa).

A Pyrin domain is found at 1 to 93; the sequence is MTSPQLEWTL…CKMAKAEMME (93 aa). The interval 104 to 123 is disordered; the sequence is ELGDAEEDSELAKPGEKEGW. The span at 113-123 shows a compositional bias: basic and acidic residues; sequence ELAKPGEKEGW. The region spanning 172–491 is the NACHT domain; sequence YTVVLHGPAG…LEKEEGEDRD (320 aa). 178–185 serves as a coordination point for ATP; it reads GPAGVGKT. 9 LRR repeats span residues 614 to 638, 674 to 697, 760 to 784, 788 to 810, 817 to 840, 845 to 868, 874 to 897, 902 to 928, and 933 to 957; these read CQDLQKLSLQVAKGVFLENYMDFEL, NSNLKFLEVKQSFLSDSSVRILCD, KCNLQYLRLGGHCATPEQWAEFFYV, NQSLKHLRLSANVLLDEGAMLLY, KHFLQMLSLENCRLTEASCKDLAA, SKKLTHLCLAKNPIGDTGVKFLCE, DCKLQTLVLQQCSITKLGCRYLSE, ACSLTNLDLSINQIARGLWILCQALEN, and LKHLRLKTYETNLEIKKLLEEVKEK.

Belongs to the NLRP family. In terms of assembly, directly interacts with CASP1 and IL1B. In terms of tissue distribution, expressed in numerous tissues including uterus and ovary, with low levels in heart and brain. Not detected in skeletal muscle.

Functionally, inhibits CASP1/caspase-1-dependent IL1B secretion. The protein is NACHT, LRR and PYD domains-containing protein 7 (NLRP7) of Homo sapiens (Human).